The following is a 492-amino-acid chain: Cytoplasmic dynein 1 light intermediate chain 2 (492 aa).

61–68 (GEDGSGKT) is a binding site for ATP. 3 disordered regions span residues 187 to 206 (PEEG…SGSD), 371 to 423 (AKQP…KNNA), and 437 to 492 (LSKK…ENEA). Serine 194 is modified (phosphoserine). Over residues 371 to 381 (AKQPATPTRAS) the composition is skewed to polar residues. Phosphoserine occurs at positions 383 and 391. Arginine 397 carries the omega-N-methylarginine modification. Residue threonine 441 is modified to Phosphothreonine. Phosphoserine occurs at positions 443 and 446. A compositionally biased stretch (polar residues) spans 452-469 (VQSTAKKSGQKTVLSNVQ). Residues 471 to 480 (ELDRMTRKPD) are compositionally biased toward basic and acidic residues. Residues 482-492 (MVTNSSTENEA) are compositionally biased toward polar residues.

Belongs to the dynein light intermediate chain family. Homodimer. The cytoplasmic dynein 1 complex consists of two catalytic heavy chains (HCs) and a number of non-catalytic subunits presented by intermediate chains (ICs), light intermediate chains (LICs) and light chains (LCs); the composition seems to vary in respect to the IC, LIC and LC composition. The heavy chain homodimer serves as a scaffold for the probable homodimeric assembly of the respective non-catalytic subunits. The ICs and LICs bind directly to the HC dimer and the LCs assemble on the IC dimer. Interacts with DYNC1H1; DYNC1LI1 and DYNC1LI2 bind mutually exclusive to DYNC1H.

It is found in the cytoplasm. The protein resides in the cytoskeleton. Its function is as follows. Acts as one of several non-catalytic accessory components of the cytoplasmic dynein 1 complex that are thought to be involved in linking dynein to cargos and to adapter proteins that regulate dynein function. Cytoplasmic dynein 1 acts as a motor for the intracellular retrograde motility of vesicles and organelles along microtubules. May play a role in binding dynein to membranous organelles or chromosomes. The chain is Cytoplasmic dynein 1 light intermediate chain 2 (DYNC1LI2) from Pongo abelii (Sumatran orangutan).